The sequence spans 273 residues: Cbp/p300-interacting transactivator 2 (273 aa).

The disordered stretch occupies residues 137–204 (DLHPAAGHQM…GSGGSGSSNM (68 aa)). The segment covering 165–200 (STPGGSGGSSTPGGSGGSAGGGAGSSNSGGGSGGSG) has biased composition (gly residues).

The protein belongs to the CITED family. As to quaternary structure, interacts (via C-terminus) with SMAD2. Interacts (via C-terminus) with SMAD3 (via MH2 domain). Interacts with LHX2 (via LIM domains). Interacts with WT1. Interacts (via C-terminus) with EP300 (via CH1 domain); the interaction is stimulated in response to hypoxia. Interacts with PPARA. Interacts (via C-terminus) with TFAP2A, TFAP2B and TFAP2C.

Its subcellular location is the nucleus. In terms of biological role, transcriptional coactivator of the p300/CBP-mediated transcription complex. Acts as a bridge, linking TFAP2 transcription factors and the p300/CBP transcriptional coactivator complex in order to stimulate TFAP2-mediated transcriptional activation. Positively regulates TGF-beta signaling through its association with the SMAD/p300/CBP-mediated transcriptional coactivator complex. Stimulates the peroxisome proliferator-activated receptors PPARA transcriptional activity. Enhances estrogen-dependent transactivation mediated by estrogen receptors. Also acts as a transcriptional corepressor; interferes with the binding of the transcription factors HIF1A or STAT2 and the p300/CBP transcriptional coactivator complex. Participates in sex determination and early gonad development by stimulating transcription activation of SRY. Plays a role in controlling left-right patterning during embryogenesis; potentiates transcriptional activation of NODAL-mediated gene transcription in the left lateral plate mesoderm (LPM). Plays an essential role in differentiation of the adrenal cortex from the adrenogonadal primordium (AGP); stimulates WT1-mediated transcription activation thereby up-regulating the nuclear hormone receptor NR5A1 promoter activity. Associates with chromatin to the PITX2 P1 promoter region. The chain is Cbp/p300-interacting transactivator 2 (CITED2) from Saguinus labiatus (Red-chested mustached tamarin).